We begin with the raw amino-acid sequence, 308 residues long: Protein translocase subunit SecF (308 aa).

Helical transmembrane passes span 28 to 48 (SIIL…NFGI), 140 to 160 (IEAG…YIWV), 164 to 184 (WYFG…ALGF), 194 to 214 (LSTI…SVVI), 246 to 266 (ILTV…GGEA), and 272 to 292 (VLVF…SAPI).

Belongs to the SecD/SecF family. SecF subfamily. Forms a complex with SecD. Part of the essential Sec protein translocation apparatus which comprises SecA, SecYEG and auxiliary proteins SecDF-YajC and YidC.

The protein localises to the cell inner membrane. In terms of biological role, part of the Sec protein translocase complex. Interacts with the SecYEG preprotein conducting channel. SecDF uses the proton motive force (PMF) to complete protein translocation after the ATP-dependent function of SecA. This is Protein translocase subunit SecF from Rickettsia felis (strain ATCC VR-1525 / URRWXCal2) (Rickettsia azadi).